A 767-amino-acid polypeptide reads, in one-letter code: ABC transporter B family member 4 (767 aa).

The disordered stretch occupies residues 81–104 (NYSSSSNSGNNNNNNYNNKNNNNN). 5 helical membrane passes run 208–228 (IWLF…GLQI), 252–272 (AIFI…MISV), 324–344 (VSLG…LILI), 350–370 (LGMM…AGWL), and 429–449 (IGIF…LVYW). The ABC transmembrane type-1 domain maps to 211 to 491 (FGFGIITAFF…LSILFTQIMS (281 aa)). Residues 524–760 (IKFINVDFKY…KGLYYKLVQR (237 aa)) form the ABC transporter domain. ATP is bound at residue 559–566 (GSSGGGKS).

This sequence belongs to the ABC transporter superfamily. ABCB family. Multidrug resistance exporter (TC 3.A.1.201) subfamily.

The protein resides in the membrane. This chain is ABC transporter B family member 4 (abcB4), found in Dictyostelium discoideum (Social amoeba).